A 291-amino-acid chain; its full sequence is Protease HtpX homolog (291 aa).

Helical transmembrane passes span 4–24 (VFLF…SARL) and 38–58 (MGML…ISLL). H144 provides a ligand contact to Zn(2+). The active site involves E145. Residue H148 participates in Zn(2+) binding. The next 2 membrane-spanning stretches (helical) occupy residues 159–179 (LIQG…AYAL) and 199–219 (ISSI…VMYF). A Zn(2+)-binding site is contributed by E224.

It belongs to the peptidase M48B family. Zn(2+) is required as a cofactor.

The protein resides in the cell inner membrane. The protein is Protease HtpX homolog of Chlorobium phaeovibrioides (strain DSM 265 / 1930) (Prosthecochloris vibrioformis (strain DSM 265)).